A 901-amino-acid polypeptide reads, in one-letter code: PGC-1 and ERR-induced regulator in muscle protein 1 (901 aa).

Disordered stretches follow at residues 29–511, 564–671, and 731–752; these read QAGL…MPAS, SLEG…MGPG, and RHQEGRSQAPLLKAGSVPAPPP. Over residues 100 to 112 the composition is skewed to polar residues; it reads GQQTPSTSAQSEA. Over residues 157 to 178 the composition is skewed to low complexity; that stretch reads GEPAGSPESPVHSAAPQRSPGS. 5 stretches are compositionally biased toward polar residues: residues 267 to 276, 347 to 379, 387 to 418, 426 to 457, and 465 to 484; these read LSTSVSTTEQ, DESQSTSAFNAQPNEPQSTPTFSPQPDEPQSTP, EPQSTSAFNAQPNEPQSTLAFSPQPDEPQSTP, EPQSTPAFNVQPNEPQSTPAFSPQPNEPQSTP, and EPQSTPAFNTQPNEPQSTPT. Low complexity predominate over residues 608–624; the sequence is PSSEEPGSGEVSGPLSP.

The protein localises to the cytoplasm. The protein resides in the nucleus. Regulates the expression of selective PPARGC1A/B and ESRRA/B/G target genes with roles in glucose and lipid metabolism, energy transfer, contractile function, muscle mitochondrial biogenesis and oxidative capacity. Required for the efficient induction of MT-CO2, MT-CO3, COX4I1, TFB1M, TFB2M, POLRMT and SIRT3 by PPARGC1A. Positively regulates the PPARGC1A/ESRRG-induced expression of CKMT2, TNNI3 and SLC2A4 and negatively regulates the PPARGC1A/ESRRG-induced expression of PDK4. The sequence is that of PGC-1 and ERR-induced regulator in muscle protein 1 (PERM1) from Bos taurus (Bovine).